Reading from the N-terminus, the 201-residue chain is Recombination protein RecR (201 aa).

Residues 60 to 75 (CSRCGNVDTVDPCTVC) form a C4-type zinc finger. The Toprim domain occupies 83-178 (SVIIVVEDVS…KITRLAHGVP (96 aa)).

This sequence belongs to the RecR family.

Functionally, may play a role in DNA repair. It seems to be involved in an RecBC-independent recombinational process of DNA repair. It may act with RecF and RecO. The protein is Recombination protein RecR of Rhizobium etli (strain CIAT 652).